Consider the following 418-residue polypeptide: eIF5-mimic protein 2-B (418 aa).

A compositionally biased stretch (polar residues) spans 1 to 15 (MSYQKQQKPTLTGQR). Positions 1–29 (MSYQKQQKPTLTGQRFKTRKRDEKERFDP) are disordered. A W2 domain is found at 247–414 (NQQSLGARKE…KNAEEESESE (168 aa)).

This sequence belongs to the BZW family.

In terms of biological role, translation initiation regulator which may repress repeat-associated non-AUG (RAN) initiated translation probably by acting as a competitive inhibitor of eukaryotic translation initiation factor 5 (EIF5) function. Enhances histone H4 gene transcription but does not seem to bind DNA directly. In Danio rerio (Zebrafish), this protein is eIF5-mimic protein 2-B (bzw1b).